Here is a 185-residue protein sequence, read N- to C-terminus: Peptidyl-tRNA hydrolase (185 aa).

Tyrosine 14 is a binding site for tRNA. Histidine 19 serves as the catalytic Proton acceptor. Residues phenylalanine 63, asparagine 65, and asparagine 111 each coordinate tRNA.

This sequence belongs to the PTH family. Monomer.

The protein resides in the cytoplasm. The enzyme catalyses an N-acyl-L-alpha-aminoacyl-tRNA + H2O = an N-acyl-L-amino acid + a tRNA + H(+). In terms of biological role, hydrolyzes ribosome-free peptidyl-tRNAs (with 1 or more amino acids incorporated), which drop off the ribosome during protein synthesis, or as a result of ribosome stalling. Catalyzes the release of premature peptidyl moieties from peptidyl-tRNA molecules trapped in stalled 50S ribosomal subunits, and thus maintains levels of free tRNAs and 50S ribosomes. The polypeptide is Peptidyl-tRNA hydrolase (Desulfitobacterium hafniense (strain Y51)).